A 159-amino-acid chain; its full sequence is SsrA-binding protein (159 aa).

The protein belongs to the SmpB family.

The protein resides in the cytoplasm. Required for rescue of stalled ribosomes mediated by trans-translation. Binds to transfer-messenger RNA (tmRNA), required for stable association of tmRNA with ribosomes. tmRNA and SmpB together mimic tRNA shape, replacing the anticodon stem-loop with SmpB. tmRNA is encoded by the ssrA gene; the 2 termini fold to resemble tRNA(Ala) and it encodes a 'tag peptide', a short internal open reading frame. During trans-translation Ala-aminoacylated tmRNA acts like a tRNA, entering the A-site of stalled ribosomes, displacing the stalled mRNA. The ribosome then switches to translate the ORF on the tmRNA; the nascent peptide is terminated with the 'tag peptide' encoded by the tmRNA and targeted for degradation. The ribosome is freed to recommence translation, which seems to be the essential function of trans-translation. The chain is SsrA-binding protein from Dichelobacter nodosus (strain VCS1703A).